Reading from the N-terminus, the 157-residue chain is Ribosome-binding factor A (157 aa).

Positions 126–157 (RARATAQYAGDADPYKHDDEPSDDFEDDSDEE) are disordered. Acidic residues predominate over residues 145 to 157 (EPSDDFEDDSDEE).

This sequence belongs to the RbfA family. As to quaternary structure, monomer. Binds 30S ribosomal subunits, but not 50S ribosomal subunits or 70S ribosomes.

It is found in the cytoplasm. One of several proteins that assist in the late maturation steps of the functional core of the 30S ribosomal subunit. Associates with free 30S ribosomal subunits (but not with 30S subunits that are part of 70S ribosomes or polysomes). Required for efficient processing of 16S rRNA. May interact with the 5'-terminal helix region of 16S rRNA. This is Ribosome-binding factor A from Bifidobacterium longum (strain DJO10A).